Consider the following 538-residue polypeptide: Eukaryotic translation initiation factor 3 subunit L (538 aa).

The PCI domain maps to 305–513 (TFSDILLYIQ…IHIADTKVSH (209 aa)).

Belongs to the eIF-3 subunit L family. As to quaternary structure, component of the eukaryotic translation initiation factor 3 (eIF-3) complex. The eIF-3 complex interacts with pix.

It localises to the cytoplasm. Its function is as follows. Component of the eukaryotic translation initiation factor 3 (eIF-3) complex, which is involved in protein synthesis of a specialized repertoire of mRNAs and, together with other initiation factors, stimulates binding of mRNA and methionyl-tRNAi to the 40S ribosome. The eIF-3 complex specifically targets and initiates translation of a subset of mRNAs involved in cell proliferation. This Drosophila mojavensis (Fruit fly) protein is Eukaryotic translation initiation factor 3 subunit L.